The sequence spans 1172 residues: Short transient receptor potential channel 2 (1172 aa).

Basic and acidic residues predominate over residues 1 to 10 (MLMSRTDSKS). 4 disordered regions span residues 1-22 (MLMS…MFKD), 69-98 (VVDP…WLTN), 140-227 (SAAR…GGVQ), and 249-271 (ATCG…SESV). The Cytoplasmic segment spans residues 1–659 (MLMSRTDSKS…PKSQLGRLLK (659 aa)). Residues 75 to 87 (PGSSGLNQNSTDV) are compositionally biased toward polar residues. Basic and acidic residues predominate over residues 166–177 (ESAEPRAEEPNR). The span at 195–204 (SLSNSSSQPN) shows a compositional bias: polar residues. The span at 206 to 218 (RTGRTRQRQHRPQ) shows a compositional bias: basic residues. Over residues 261-270 (SPASLSSSES) the composition is skewed to low complexity. ANK repeat units follow at residues 301-330 (KFPP…DASG), 377-406 (QIHE…REKG), and 430-459 (PGVT…TIAR). Residues 660–680 (IPVLKFLLHSASYLWFLIFLL) form a helical membrane-spanning segment. The Extracellular portion of the chain corresponds to 681–702 (GESLVMETQLSTFKGRSQSVWE). The helical transmembrane segment at 703-723 (TSLHMIWVTGFLWFECKEVWI) threads the bilayer. At 724–738 (EGLRSYLLDWWNFLD) the chain is on the cytoplasmic side. A helical transmembrane segment spans residues 739–759 (VVILSLYLASFALRLLLAGLA). Over 760 to 789 (YMHCRDASDSTTCRYFTTAERSEWRTEDPQ) the chain is Extracellular. The chain crosses the membrane as a helical span at residues 790–810 (FLAEVLFAVTSMLSFTRLAYI). At 811 to 833 (LPAHESLGTLQISIGKMIDDMIR) the chain is on the cytoplasmic side. The helical transmembrane segment at 834–854 (FMFILMIILTAFLCGLNNIYV) threads the bilayer. At 855–899 (PYQESEKLGNFNETFQFLFWTMFGMEEHTVVDMPQFLVPEFVGRA) the chain is on the extracellular side. The chain crosses the membrane as a helical span at residues 900-920 (MYGIFTIVMVIVLLNMLIAMI). The Cytoplasmic segment spans residues 921-1172 (TNSFQKIEDD…EGDLETKGES (252 aa)). Residues 1118 to 1172 (VSLGDGLDGTGEAGAPAPGEPGSSSSAHVLVHREQEAEGSGDLLLEGDLETKGES) are disordered. The segment covering 1130 to 1144 (AGAPAPGEPGSSSSA) has biased composition (low complexity).

The protein belongs to the transient receptor (TC 1.A.4) family. STrpC subfamily. TRPC2 sub-subfamily. Isoform 3 is ubiquitously expressed at low levels. Isoform 4 is expressed exclusively in vomeronasal organ.

Its subcellular location is the membrane. Functionally, thought to form a receptor-activated non-selective calcium permeant cation channel. Probably is operated by a phosphatidylinositol second messenger system activated by receptor tyrosine kinases or G-protein coupled receptors. May also be activated by intracellular calcium store depletion. Plays a role in mediating responsivity to pheromones that elicit aggressive and mating behaviors. Required for response to the Esp1 pheromone which enhances female sexual receptive behavior and to the Esp22 pheromone which inhibits adult male mating behavior. The sequence is that of Short transient receptor potential channel 2 (Trpc2) from Mus musculus (Mouse).